The following is a 75-amino-acid chain: MYB-like transcription factor ETC3 (75 aa).

A disordered region spans residues 1-20 (MDNHRRTKQPKTNSIVTSSS). The region spanning 34–71 (SQEEEDLVSRMHKLVGDRWELIAGRIPGRTAGEIERFW) is the Myb-like domain.

As to expression, expressed in leaf epidermal cells, stomate guard cells in leaves, cotyledons and hypocotyls, inflorescences, developing seeds and siliques.

The protein resides in the nucleus. MYB-type transcription factor involved in epidermal cell fate specification. Acts as a negative regulator of trichome development, including endoreplication, by mediating lateral inhibition. Promotes the formation of hair developing cells in H position in root epidermis, probably by inhibiting non-hair cell formation. May have pleiotropic effects on flowering development and epidermal cell size through the regulation of endoreduplication. The polypeptide is MYB-like transcription factor ETC3 (ETC3) (Arabidopsis thaliana (Mouse-ear cress)).